Here is a 295-residue protein sequence, read N- to C-terminus: Small ribosomal subunit protein uS2 (295 aa).

Residues 261-295 (QAKKFSKTKNIDEETNTEFEQVLNDADENKNSDNA) form a disordered region.

It belongs to the universal ribosomal protein uS2 family.

The polypeptide is Small ribosomal subunit protein uS2 (Rickettsia rickettsii (strain Sheila Smith)).